A 257-amino-acid chain; its full sequence is Imidazole glycerol phosphate synthase subunit HisF (257 aa).

Residues Asp11 and Asp130 contribute to the active site.

This sequence belongs to the HisA/HisF family. As to quaternary structure, heterodimer of HisH and HisF.

It localises to the cytoplasm. The enzyme catalyses 5-[(5-phospho-1-deoxy-D-ribulos-1-ylimino)methylamino]-1-(5-phospho-beta-D-ribosyl)imidazole-4-carboxamide + L-glutamine = D-erythro-1-(imidazol-4-yl)glycerol 3-phosphate + 5-amino-1-(5-phospho-beta-D-ribosyl)imidazole-4-carboxamide + L-glutamate + H(+). Its pathway is amino-acid biosynthesis; L-histidine biosynthesis; L-histidine from 5-phospho-alpha-D-ribose 1-diphosphate: step 5/9. Functionally, IGPS catalyzes the conversion of PRFAR and glutamine to IGP, AICAR and glutamate. The HisF subunit catalyzes the cyclization activity that produces IGP and AICAR from PRFAR using the ammonia provided by the HisH subunit. This chain is Imidazole glycerol phosphate synthase subunit HisF, found in Shewanella baltica (strain OS223).